Here is a 152-residue protein sequence, read N- to C-terminus: Mid1-interacting protein 1A (152 aa).

Residues 87-105 are compositionally biased toward basic and acidic residues; it reads SEDQRRKKDTSASEPVRTE. Positions 87 to 109 are disordered; that stretch reads SEDQRRKKDTSASEPVRTEEESD.

This sequence belongs to the SPOT14 family. In terms of tissue distribution, expressed for a short period in the cells that will produce the enveloping layer (EVL).

Its subcellular location is the nucleus. The protein localises to the cytoplasm. It is found in the cytoskeleton. Involved in stabilization of microtubules. May play a role in the regulation of lipogenesis. This chain is Mid1-interacting protein 1A (mid1ip1a), found in Danio rerio (Zebrafish).